We begin with the raw amino-acid sequence, 179 residues long: Large ribosomal subunit protein uL6 (179 aa).

Belongs to the universal ribosomal protein uL6 family. As to quaternary structure, part of the 50S ribosomal subunit.

Its function is as follows. This protein binds to the 23S rRNA, and is important in its secondary structure. It is located near the subunit interface in the base of the L7/L12 stalk, and near the tRNA binding site of the peptidyltransferase center. This chain is Large ribosomal subunit protein uL6, found in Rippkaea orientalis (strain PCC 8801 / RF-1) (Cyanothece sp. (strain PCC 8801)).